The following is a 130-amino-acid chain: Small ribosomal subunit protein uS9 (130 aa).

Belongs to the universal ribosomal protein uS9 family.

The sequence is that of Small ribosomal subunit protein uS9 from Bacillus anthracis (strain A0248).